The following is a 458-amino-acid chain: ATP synthase subunit beta (458 aa).

148 to 155 (GGAGVGKT) is an ATP binding site.

It belongs to the ATPase alpha/beta chains family. F-type ATPases have 2 components, CF(1) - the catalytic core - and CF(0) - the membrane proton channel. CF(1) has five subunits: alpha(3), beta(3), gamma(1), delta(1), epsilon(1). CF(0) has three main subunits: a(1), b(2) and c(9-12). The alpha and beta chains form an alternating ring which encloses part of the gamma chain. CF(1) is attached to CF(0) by a central stalk formed by the gamma and epsilon chains, while a peripheral stalk is formed by the delta and b chains.

The protein localises to the cell inner membrane. It carries out the reaction ATP + H2O + 4 H(+)(in) = ADP + phosphate + 5 H(+)(out). Functionally, produces ATP from ADP in the presence of a proton gradient across the membrane. The catalytic sites are hosted primarily by the beta subunits. The polypeptide is ATP synthase subunit beta (Francisella tularensis subsp. novicida (strain U112)).